Reading from the N-terminus, the 38-residue chain is Toxin BmK NSPK (38 aa).

Intrachain disulfides connect Cys7/Cys27, Cys13/Cys32, and Cys17/Cys34.

Expressed by the venom gland.

It is found in the secreted. In terms of biological role, blocks voltage-gated potassium (Kv) channel and augments neurite extension via NGF/TrkA signaling pathway. This chain is Toxin BmK NSPK, found in Olivierus martensii (Manchurian scorpion).